A 478-amino-acid chain; its full sequence is Protein WVD2-like 7 (478 aa).

2 disordered regions span residues 201–326 and 385–420; these read DSAL…TGST and PMPS…SASI. Positions 208 to 217 are enriched in basic and acidic residues; the sequence is AGSKLDEHAS. Polar residues-rich tracts occupy residues 219-232 and 264-277; these read KPSN…SSVN and GSSL…NVDA. Basic and acidic residues predominate over residues 278-289; sequence KSQKELRPKKTI. Polar residues-rich tracts occupy residues 309–326 and 407–420; these read RCKT…TGST and VAQS…SASI.

It belongs to the TPX2 family. In terms of tissue distribution, expressed in seedlings.

It is found in the cytoplasm. The protein resides in the cytoskeleton. Its function is as follows. Microtubule-associated protein (MAP) that regulates the orientation of interphase cortical microtubules. In Arabidopsis thaliana (Mouse-ear cress), this protein is Protein WVD2-like 7.